The primary structure comprises 423 residues: Serine--tRNA ligase (423 aa).

229–231 (TAE) contributes to the L-serine binding site. 260-262 (RRE) contributes to the ATP binding site. E283 is an L-serine binding site. Residue 347–350 (EISS) coordinates ATP. S383 serves as a coordination point for L-serine.

This sequence belongs to the class-II aminoacyl-tRNA synthetase family. Type-1 seryl-tRNA synthetase subfamily. As to quaternary structure, homodimer. The tRNA molecule binds across the dimer.

It localises to the cytoplasm. The catalysed reaction is tRNA(Ser) + L-serine + ATP = L-seryl-tRNA(Ser) + AMP + diphosphate + H(+). It catalyses the reaction tRNA(Sec) + L-serine + ATP = L-seryl-tRNA(Sec) + AMP + diphosphate + H(+). It functions in the pathway aminoacyl-tRNA biosynthesis; selenocysteinyl-tRNA(Sec) biosynthesis; L-seryl-tRNA(Sec) from L-serine and tRNA(Sec): step 1/1. Catalyzes the attachment of serine to tRNA(Ser). Is also able to aminoacylate tRNA(Sec) with serine, to form the misacylated tRNA L-seryl-tRNA(Sec), which will be further converted into selenocysteinyl-tRNA(Sec). The polypeptide is Serine--tRNA ligase (Trichlorobacter lovleyi (strain ATCC BAA-1151 / DSM 17278 / SZ) (Geobacter lovleyi)).